The chain runs to 315 residues: Apolipoprotein F (315 aa).

The N-terminal stretch at 1-24 (MHSLRLILMSIQLLCYLLLCPVDA) is a signal peptide. The propeptide occupies 25 to 154 (TSHGEATSVS…EQPGPKRAKR (130 aa)).

Belongs to the apolipoprotein F family. In terms of tissue distribution, liver.

It is found in the secreted. In terms of biological role, minor apolipoprotein that associates with LDL. Inhibits cholesteryl ester transfer protein (CETP) activity and appears to be an important regulator of cholesterol transport. Also associates to a lesser degree with VLDL, Apo-AI and Apo-AII. In Mus musculus (Mouse), this protein is Apolipoprotein F (Apof).